Consider the following 688-residue polypeptide: Probable xyloglucan glycosyltransferase 7 (688 aa).

Positions 1–25 (MAPSWWGRSGGGGVGNGGGTPVVVK) are disordered. Over residues 8-20 (RSGGGGVGNGGGT) the composition is skewed to gly residues. The next 2 membrane-spanning stretches (helical) occupy residues 121-141 (VSLV…LQGW) and 183-203 (VALF…CFWI). Aspartate 269 is an active-site residue. 2 residues coordinate substrate: aspartate 328 and aspartate 330. The active site involves aspartate 422. 2 consecutive transmembrane segments (helical) span residues 500 to 520 (LILP…TMFV) and 525 to 545 (LPAW…ILPA). The interval 604–635 (HSKQQRVGSAPNLDALTKEESNPKKDSKKKKH) is disordered. Over residues 619-628 (LTKEESNPKK) the composition is skewed to basic and acidic residues. The next 2 membrane-spanning stretches (helical) occupy residues 638–657 (IYRK…ARSL) and 663–683 (IHFY…LDLI).

Belongs to the glycosyltransferase 2 family. Plant cellulose synthase-like C subfamily.

Its subcellular location is the golgi apparatus membrane. In terms of biological role, probable beta-1,4-glucan synthase rather involved in the synthesis of the xyloglucan backbone than cellulose. Seems to work simultaneously with xyloglucan 6-xylosyltransferase. Xyloglucan is a noncellulosic polysaccharides of plant cell wall and consists of a glucan backbone substituted by xylose, galactose and fucose. The protein is Probable xyloglucan glycosyltransferase 7 (CSLC7) of Oryza sativa subsp. japonica (Rice).